The sequence spans 455 residues: Adhesin YadA (455 aa).

A signal peptide spans M1–A25. The segment at D26–Y363 is surface exposed passenger domain. The stretch at V209 to K243 forms a coiled coil. Positions T364–G402 are outer membrane translocation of the passenger domain. 4 beta stranded membrane passes run G402 to G412, S416 to V427, K434 to A440, and D444 to W455. A translocator domain region spans residues K403 to W455.

This sequence belongs to the autotransporter-2 (AT-2) (TC 1.B.40) family. Homotrimer; in gels migrates as monomers, dimers and homotrimers. Does not form trimers with distantly related EibA from E.coli; coexpression was lethal and one of the genes is eliminated in vivo. If the full translocator domain (368-455) is exchanged with that of EibA ('299-392'), will form heterotrimers with EibA and vice-versa.

It is found in the cell surface. The protein resides in the cell outer membrane. Collagen-binding outer membrane protein forming a fibrillar matrix on the bacterial cell surface. Promotes initial attachment and invasion of eukaryotic cells. Also protects the bacteria by being responsible for agglutination, serum resistance, complement inactivation and phagocytosis resistance. This Yersinia enterocolitica protein is Adhesin YadA (yadA).